A 159-amino-acid chain; its full sequence is Ribosomal RNA large subunit methyltransferase H (159 aa).

Residues leucine 76, glycine 108, and 127-132 (FGRLTY) contribute to the S-adenosyl-L-methionine site.

This sequence belongs to the RNA methyltransferase RlmH family. In terms of assembly, homodimer.

Its subcellular location is the cytoplasm. The enzyme catalyses pseudouridine(1915) in 23S rRNA + S-adenosyl-L-methionine = N(3)-methylpseudouridine(1915) in 23S rRNA + S-adenosyl-L-homocysteine + H(+). In terms of biological role, specifically methylates the pseudouridine at position 1915 (m3Psi1915) in 23S rRNA. This chain is Ribosomal RNA large subunit methyltransferase H, found in Enterococcus faecalis (strain ATCC 700802 / V583).